We begin with the raw amino-acid sequence, 407 residues long: uncharacterized protein (407 aa).

Disordered stretches follow at residues 1 to 64, 110 to 276, and 314 to 341; these read MSRK…EPFD, GFGP…YPQF, and QSRP…HNNP. The span at 7 to 32 shows a compositional bias: polar residues; it reads KQSNPKRNYKNDNYFQENSYTMTNGF. Over residues 33–44 the composition is skewed to basic and acidic residues; the sequence is TKDKDGKPVEFK. A compositionally biased stretch (acidic residues) spans 122 to 137; it reads DSDSEYSDECLTDECS. Composition is skewed to polar residues over residues 138–147 and 184–201; these read DNYNKQSTDS and NFDN…NSQP. Residues 209 to 231 are compositionally biased toward low complexity; that stretch reads SKSSSKSSKSNKSNKSSKSNKSS. The span at 232–246 shows a compositional bias: basic residues; the sequence is KSSKSKSNKHSKHKN. Residues 247 to 258 are compositionally biased toward basic and acidic residues; it reads KSDSSSDSDEKT. 2 stretches are compositionally biased toward basic residues: residues 259-270 and 316-341; these read HKHKDRRHRRGR and RPRK…HNNP.

This is an uncharacterized protein from Acanthamoeba polyphaga mimivirus (APMV).